We begin with the raw amino-acid sequence, 440 residues long: Chitinase-like protein Idgf5 (440 aa).

A signal peptide spans 1–27 (MRNKMIYFNFHLFVIIFANLQIFQVQA). Residues 28–439 (ANIFCYYDTQ…KSIHNAFKKF (412 aa)) form the GH18 domain. Cys-32 and Cys-56 form a disulfide bridge. N-linked (GlcNAc...) asparagine glycosylation is found at Asn-126, Asn-283, and Asn-403. Cys-340 and Cys-421 are joined by a disulfide.

It belongs to the glycosyl hydrolase 18 family. IDGF subfamily. Glycosylated.

Its subcellular location is the secreted. In terms of biological role, cooperates with insulin-like peptides to stimulate the proliferation, polarization and motility of imaginal disk cells. May act by stabilizing the binding of insulin-like peptides to its receptor through a simultaneous interaction with both molecules to form a multiprotein signaling complex. This Glossina morsitans morsitans (Savannah tsetse fly) protein is Chitinase-like protein Idgf5 (Idgf5).